The following is a 213-amino-acid chain: Gas vesicle protein F (213 aa).

The protein belongs to the gas vesicle GvpF/GvpL family. In terms of assembly, binds GvpA.

It is found in the gas vesicle. Its function is as follows. A minor component of the gas vesicle, may be involved in preventing GvpA aggregation during gas vesicle nucleation. Gas vesicles are hollow, gas filled proteinaceous nanostructures found in some microorganisms. They allow positioning of halobacteria at the optimal depth for growth in the poorly aerated, shallow brine pools of their habitat. Functionally, expression of a 9.5 kb mc-vac DNA fragment containing 2 divergently transcribed regions (gvpD-gvpE-gvpF-gvpG-gvpH-gvpI-gvpJ-gvpK-gvpL-gvpM and gvpA-gvpC-gvpN-gvpO) allows H.volcanii to produce gas vesicles. The protein is Gas vesicle protein F of Haloferax mediterranei (strain ATCC 33500 / DSM 1411 / JCM 8866 / NBRC 14739 / NCIMB 2177 / R-4) (Halobacterium mediterranei).